Reading from the N-terminus, the 790-residue chain is Lon protease 2 (790 aa).

The region spanning 18–210 (LRILPLRNMV…HVTFYMTRQL (193 aa)) is the Lon N-terminal domain. 362–369 (GPPGVGKT) is an ATP binding site. In terms of domain architecture, Lon proteolytic spans 598 to 779 (SWGCGIATGL…SDVLQLALLP (182 aa)). Residues serine 685 and lysine 728 contribute to the active site.

Belongs to the peptidase S16 family. Homohexamer. Organized in a ring with a central cavity.

The protein resides in the cytoplasm. It catalyses the reaction Hydrolysis of proteins in presence of ATP.. In terms of biological role, ATP-dependent serine protease that mediates the selective degradation of mutant and abnormal proteins as well as certain short-lived regulatory proteins. Required for cellular homeostasis and for survival from DNA damage and developmental changes induced by stress. Degrades polypeptides processively to yield small peptide fragments that are 5 to 10 amino acids long. Binds to DNA in a double-stranded, site-specific manner. The sequence is that of Lon protease 2 from Syntrophobacter fumaroxidans (strain DSM 10017 / MPOB).